A 364-amino-acid chain; its full sequence is tRNA 2-selenouridine synthase (364 aa).

In terms of domain architecture, Rhodanese spans 14–137 (LLADTPLIDV…LRQTAIQATW (124 aa)). C97 serves as the catalytic S-selanylcysteine intermediate.

It belongs to the SelU family. Monomer.

The enzyme catalyses 5-methylaminomethyl-2-thiouridine(34) in tRNA + selenophosphate + (2E)-geranyl diphosphate + H2O + H(+) = 5-methylaminomethyl-2-selenouridine(34) in tRNA + (2E)-thiogeraniol + phosphate + diphosphate. It catalyses the reaction 5-methylaminomethyl-2-thiouridine(34) in tRNA + (2E)-geranyl diphosphate = 5-methylaminomethyl-S-(2E)-geranyl-thiouridine(34) in tRNA + diphosphate. It carries out the reaction 5-methylaminomethyl-S-(2E)-geranyl-thiouridine(34) in tRNA + selenophosphate + H(+) = 5-methylaminomethyl-2-(Se-phospho)selenouridine(34) in tRNA + (2E)-thiogeraniol. The catalysed reaction is 5-methylaminomethyl-2-(Se-phospho)selenouridine(34) in tRNA + H2O = 5-methylaminomethyl-2-selenouridine(34) in tRNA + phosphate. Involved in the post-transcriptional modification of the uridine at the wobble position (U34) of tRNA(Lys), tRNA(Glu) and tRNA(Gln). Catalyzes the conversion of 2-thiouridine (S2U-RNA) to 2-selenouridine (Se2U-RNA). Acts in a two-step process involving geranylation of 2-thiouridine (S2U) to S-geranyl-2-thiouridine (geS2U) and subsequent selenation of the latter derivative to 2-selenouridine (Se2U) in the tRNA chain. This Salmonella gallinarum (strain 287/91 / NCTC 13346) protein is tRNA 2-selenouridine synthase.